A 462-amino-acid polypeptide reads, in one-letter code: ATP synthase subunit beta 1 (462 aa).

152–159 (GGAGVGKT) provides a ligand contact to ATP.

The protein belongs to the ATPase alpha/beta chains family. In terms of assembly, F-type ATPases have 2 components, CF(1) - the catalytic core - and CF(0) - the membrane proton channel. CF(1) has five subunits: alpha(3), beta(3), gamma(1), delta(1), epsilon(1). CF(0) has four main subunits: a(1), b(1), b'(1) and c(9-12).

The protein localises to the cell inner membrane. It catalyses the reaction ATP + H2O + 4 H(+)(in) = ADP + phosphate + 5 H(+)(out). Produces ATP from ADP in the presence of a proton gradient across the membrane. The catalytic sites are hosted primarily by the beta subunits. The chain is ATP synthase subunit beta 1 from Dinoroseobacter shibae (strain DSM 16493 / NCIMB 14021 / DFL 12).